Reading from the N-terminus, the 289-residue chain is Oxaloacetate decarboxylase (289 aa).

Serine 50 is a binding site for substrate. Aspartate 88 contacts Mg(2+). Positions 159 and 235 each coordinate substrate.

It belongs to the isocitrate lyase/PEP mutase superfamily. Oxaloacetate decarboxylase family. In terms of assembly, homotetramer; dimer of dimers. Mg(2+) is required as a cofactor.

It catalyses the reaction oxaloacetate + H(+) = pyruvate + CO2. Catalyzes the decarboxylation of oxaloacetate into pyruvate. Seems to play a role in maintaining cellular concentrations of bicarbonate and pyruvate. The sequence is that of Oxaloacetate decarboxylase from Pseudomonas syringae pv. tomato (strain ATCC BAA-871 / DC3000).